The sequence spans 208 residues: 3-demethoxyubiquinol 3-hydroxylase (208 aa).

Residues glutamate 57, glutamate 87, histidine 90, glutamate 139, glutamate 171, and histidine 174 each contribute to the Fe cation site.

It belongs to the COQ7 family. Fe cation serves as cofactor.

Its subcellular location is the cell membrane. The enzyme catalyses a 5-methoxy-2-methyl-3-(all-trans-polyprenyl)benzene-1,4-diol + AH2 + O2 = a 3-demethylubiquinol + A + H2O. It functions in the pathway cofactor biosynthesis; ubiquinone biosynthesis. In terms of biological role, catalyzes the hydroxylation of 2-nonaprenyl-3-methyl-6-methoxy-1,4-benzoquinol during ubiquinone biosynthesis. This chain is 3-demethoxyubiquinol 3-hydroxylase, found in Burkholderia multivorans (strain ATCC 17616 / 249).